The following is a 2339-amino-acid chain: DNA-directed RNA polymerase III subunit RPC1 (2339 aa).

7 residues coordinate Zn(2+): cysteine 88, cysteine 91, cysteine 98, histidine 101, cysteine 128, cysteine 131, and cysteine 175. Aspartate 611, aspartate 613, and aspartate 615 together coordinate Mg(2+). Positions 955–967 are bridging helix; the sequence is PTEFFFHTMSGRE. 2 disordered regions span residues 1503-1557 and 2038-2079; these read EKRK…NNYY and LKSE…DSDR. Over residues 1509–1520 the composition is skewed to basic and acidic residues; the sequence is PKEEKENFDRNN. Residues 1521–1557 are compositionally biased toward low complexity; it reads YKMITDNNNNDNNNNNNDNNNNDNNNNNNNSNNNNYY. Residues 2038–2047 are compositionally biased toward basic and acidic residues; sequence LKSEKKKDIN. Low complexity predominate over residues 2049–2059; it reads DNNNNDDNNNN.

Belongs to the RNA polymerase beta' chain family. Component of the RNA polymerase III (Pol III) complex consisting of 17 subunits.

The protein resides in the nucleus. The enzyme catalyses RNA(n) + a ribonucleoside 5'-triphosphate = RNA(n+1) + diphosphate. Its function is as follows. DNA-dependent RNA polymerase catalyzes the transcription of DNA into RNA using the four ribonucleoside triphosphates as substrates. Largest and catalytic core component of RNA polymerase III which synthesizes small RNAs, such as 5S rRNA and tRNAs. Forms the polymerase active center together with the second largest subunit. A single-stranded DNA template strand of the promoter is positioned within the central active site cleft of Pol III. A bridging helix emanates from RPC1 and crosses the cleft near the catalytic site and is thought to promote translocation of Pol III by acting as a ratchet that moves the RNA-DNA hybrid through the active site by switching from straight to bent conformations at each step of nucleotide addition. The chain is DNA-directed RNA polymerase III subunit RPC1 from Plasmodium falciparum.